The chain runs to 99 residues: Acylphosphatase (99 aa).

Residues 5 to 97 form the Acylphosphatase-like domain; the sequence is VRQVMIRGRV…RPGERFSQLP (93 aa). Active-site residues include Arg-20 and Asn-38.

The protein belongs to the acylphosphatase family.

It carries out the reaction an acyl phosphate + H2O = a carboxylate + phosphate + H(+). This Nitrobacter winogradskyi (strain ATCC 25391 / DSM 10237 / CIP 104748 / NCIMB 11846 / Nb-255) protein is Acylphosphatase (acyP).